Reading from the N-terminus, the 159-residue chain is SsrA-binding protein (159 aa).

The protein belongs to the SmpB family.

The protein localises to the cytoplasm. In terms of biological role, required for rescue of stalled ribosomes mediated by trans-translation. Binds to transfer-messenger RNA (tmRNA), required for stable association of tmRNA with ribosomes. tmRNA and SmpB together mimic tRNA shape, replacing the anticodon stem-loop with SmpB. tmRNA is encoded by the ssrA gene; the 2 termini fold to resemble tRNA(Ala) and it encodes a 'tag peptide', a short internal open reading frame. During trans-translation Ala-aminoacylated tmRNA acts like a tRNA, entering the A-site of stalled ribosomes, displacing the stalled mRNA. The ribosome then switches to translate the ORF on the tmRNA; the nascent peptide is terminated with the 'tag peptide' encoded by the tmRNA and targeted for degradation. The ribosome is freed to recommence translation, which seems to be the essential function of trans-translation. In Saccharophagus degradans (strain 2-40 / ATCC 43961 / DSM 17024), this protein is SsrA-binding protein.